Reading from the N-terminus, the 437-residue chain is Beta-1,3-galactosyl-O-glycosyl-glycoprotein beta-1,6-N-acetylglucosaminyltransferase 3 (437 aa).

At 1–6 (MVSWRR) the chain is on the cytoplasmic side. Residues 7–27 (FCWHYHGWTLGCYMLLAIIAL) traverse the membrane as a helical; Signal-anchor for type II membrane protein segment. Over 28–437 (KLSLRLKCDF…RHKAIYGTEL (410 aa)) the chain is Lumenal. 4 disulfides stabilise this stretch: C70–C227, C161–C381, C182–C209, and C390–C422. An N-linked (GlcNAc...) asparagine glycan is attached at N288.

The protein belongs to the glycosyltransferase 14 family. N-glycosylated.

It localises to the golgi apparatus membrane. The enzyme catalyses a 3-O-[beta-D-galactosyl-(1-&gt;3)-N-acetyl-alpha-D-galactosaminyl]-L-seryl-[protein] + UDP-N-acetyl-alpha-D-glucosamine = 3-O-{beta-D-galactosyl-(1-&gt;3)-[N-acetyl-beta-D-glucosaminyl-(1-&gt;6)]-N-acetyl-alpha-D-galactosaminyl}-L-seryl-[protein] + UDP + H(+). It carries out the reaction a 3-O-[beta-D-galactosyl-(1-&gt;3)-N-acetyl-alpha-D-galactosaminyl]-L-threonyl-[protein] + UDP-N-acetyl-alpha-D-glucosamine = a 3-O-{beta-D-galactosyl-(1-&gt;3)-[N-acetyl-beta-D-glucosaminyl-(1-&gt;6)]-N-acetyl-alpha-D-galactosaminyl}-L-threonyl-[protein] + UDP + H(+). The catalysed reaction is a beta-D-Gal-(1-&gt;4)-beta-D-GlcNAc-(1-&gt;3)-beta-D-Gal-(1-&gt;4)-beta-D-GlcNAc derivative + UDP-N-acetyl-alpha-D-glucosamine = a beta-D-Gal-(1-&gt;4)-beta-D-GlcNAc-(1-&gt;3)-[beta-D-GlcNAc-(1-&gt;6)]-beta-D-Gal-(1-&gt;4)-N-acetyl-beta-D-glucosaminyl derivative + UDP + H(+). It catalyses the reaction 3-O-[N-acetyl-beta-D-glucosaminyl-(1-&gt;3)-N-acetyl-alpha-D-galactosaminyl]-L-seryl-[protein] + UDP-N-acetyl-alpha-D-glucosamine = 3-O-[N-acetyl-beta-D-glucosaminyl-(1-&gt;3)-[N-acetyl-beta-D-glucosaminyl-(1-&gt;6)]-N-acetyl-alpha-D-galactosaminyl]-L-seryl-[protein] + UDP + H(+). The enzyme catalyses a 3-O-[N-acetyl-beta-D-glucosaminyl-(1-&gt;3)-N-acetyl-alpha-D-galactosaminyl]-L-threonyl-[protein] + UDP-N-acetyl-alpha-D-glucosamine = 3-O-[N-acetyl-beta-D-glucosaminyl-(1-&gt;3)-[N-acetyl-beta-D-glucosaminyl-(1-&gt;6)]-N-acetyl-alpha-D-galactosaminyl]-L-threonyl-[protein] + UDP + H(+). The protein operates within protein modification; protein glycosylation. Functionally, glycosyltransferase that can synthesize all known mucin beta 6 N-acetylglucosaminides. Mediates core 2 and core 4 O-glycan branching, 2 important steps in mucin-type biosynthesis. Also has I-branching enzyme activity by converting linear into branched poly-N-acetyllactosaminoglycans, leading to introduce the blood group I antigen during embryonic development. The sequence is that of Beta-1,3-galactosyl-O-glycosyl-glycoprotein beta-1,6-N-acetylglucosaminyltransferase 3 (Gcnt3) from Rattus norvegicus (Rat).